A 189-amino-acid chain; its full sequence is Adenylate kinase (189 aa).

G11–T16 is a binding site for ATP. The tract at residues S31–I60 is NMP. AMP is bound by residues T32, R37, Q58–I60, G86–R89, and Q93. An LID region spans residues K127 to D137. R128 contacts ATP. R134 and R145 together coordinate AMP. G173 lines the ATP pocket.

This sequence belongs to the adenylate kinase family. Monomer.

It localises to the cytoplasm. The enzyme catalyses AMP + ATP = 2 ADP. The protein operates within purine metabolism; AMP biosynthesis via salvage pathway; AMP from ADP: step 1/1. Its function is as follows. Catalyzes the reversible transfer of the terminal phosphate group between ATP and AMP. Plays an important role in cellular energy homeostasis and in adenine nucleotide metabolism. The sequence is that of Adenylate kinase from Bacteroides thetaiotaomicron (strain ATCC 29148 / DSM 2079 / JCM 5827 / CCUG 10774 / NCTC 10582 / VPI-5482 / E50).